Reading from the N-terminus, the 128-residue chain is Methylglyoxal synthase (128 aa).

In terms of domain architecture, MGS-like spans 1-128 (MRIALIAHDR…MQDHPGNRQA (128 aa)). Substrate contacts are provided by residues His-8, Lys-12, 34 to 37 (TGTT), and 54 to 55 (SG). The active-site Proton donor/acceptor is the Asp-60. His-87 lines the substrate pocket.

This sequence belongs to the methylglyoxal synthase family.

The catalysed reaction is dihydroxyacetone phosphate = methylglyoxal + phosphate. Its function is as follows. Catalyzes the formation of methylglyoxal from dihydroxyacetone phosphate. This chain is Methylglyoxal synthase, found in Moorella thermoacetica (strain ATCC 39073 / JCM 9320).